Here is a 312-residue protein sequence, read N- to C-terminus: Ribosomal protein L11 methyltransferase (312 aa).

S-adenosyl-L-methionine contacts are provided by Thr-159, Gly-180, Asp-201, and Asn-244.

The protein belongs to the methyltransferase superfamily. PrmA family.

The protein localises to the cytoplasm. The enzyme catalyses L-lysyl-[protein] + 3 S-adenosyl-L-methionine = N(6),N(6),N(6)-trimethyl-L-lysyl-[protein] + 3 S-adenosyl-L-homocysteine + 3 H(+). Methylates ribosomal protein L11. The sequence is that of Ribosomal protein L11 methyltransferase from Desulfitobacterium hafniense (strain DSM 10664 / DCB-2).